A 504-amino-acid polypeptide reads, in one-letter code: Glycerol kinase (504 aa).

Thr12 provides a ligand contact to ADP. 3 residues coordinate ATP: Thr12, Thr13, and Ser14. Thr12 serves as a coordination point for sn-glycerol 3-phosphate. Arg16 is an ADP binding site. Residues Arg82, Glu83, Tyr134, and Asp246 each coordinate sn-glycerol 3-phosphate. Residues Arg82, Glu83, Tyr134, Asp246, and Gln247 each contribute to the glycerol site. ADP contacts are provided by Thr268 and Gly312. Thr268, Gly312, Gln316, and Gly413 together coordinate ATP. Gly413 and Asn417 together coordinate ADP.

The protein belongs to the FGGY kinase family.

It carries out the reaction glycerol + ATP = sn-glycerol 3-phosphate + ADP + H(+). It functions in the pathway polyol metabolism; glycerol degradation via glycerol kinase pathway; sn-glycerol 3-phosphate from glycerol: step 1/1. Inhibited by fructose 1,6-bisphosphate (FBP). Key enzyme in the regulation of glycerol uptake and metabolism. Catalyzes the phosphorylation of glycerol to yield sn-glycerol 3-phosphate. In Paenarthrobacter aurescens (strain TC1), this protein is Glycerol kinase.